The sequence spans 224 residues: UPF0758 protein Mmwyl1_0624 (224 aa).

The MPN domain occupies 102–224; the sequence is VFASAEHVRT…PVSLAERGLV (123 aa). His173, His175, and Asp186 together coordinate Zn(2+). A JAMM motif motif is present at residues 173 to 186; sequence HNHPSGIAEPSQAD.

It belongs to the UPF0758 family.

The sequence is that of UPF0758 protein Mmwyl1_0624 from Marinomonas sp. (strain MWYL1).